The following is a 23-amino-acid chain: Putative gene 50 protein (23 aa).

This is Putative gene 50 protein (50) from Bacillus subtilis (Bacteriophage SP01).